We begin with the raw amino-acid sequence, 458 residues long: UDP-N-acetylmuramoylalanine--D-glutamate ligase (458 aa).

Glycine 124 to threonine 130 is a binding site for ATP.

It belongs to the MurCDEF family.

The protein resides in the cytoplasm. The enzyme catalyses UDP-N-acetyl-alpha-D-muramoyl-L-alanine + D-glutamate + ATP = UDP-N-acetyl-alpha-D-muramoyl-L-alanyl-D-glutamate + ADP + phosphate + H(+). The protein operates within cell wall biogenesis; peptidoglycan biosynthesis. Cell wall formation. Catalyzes the addition of glutamate to the nucleotide precursor UDP-N-acetylmuramoyl-L-alanine (UMA). This Clostridium botulinum (strain Kyoto / Type A2) protein is UDP-N-acetylmuramoylalanine--D-glutamate ligase.